A 139-amino-acid chain; its full sequence is D-ribose pyranase (139 aa).

The active-site Proton donor is the histidine 20. Substrate contacts are provided by residues aspartate 28, histidine 106, and 128-130; that span reads YAN.

This sequence belongs to the RbsD / FucU family. RbsD subfamily. Homodecamer.

The protein resides in the cytoplasm. It catalyses the reaction beta-D-ribopyranose = beta-D-ribofuranose. Its pathway is carbohydrate metabolism; D-ribose degradation; D-ribose 5-phosphate from beta-D-ribopyranose: step 1/2. Catalyzes the interconversion of beta-pyran and beta-furan forms of D-ribose. This is D-ribose pyranase from Aeromonas hydrophila subsp. hydrophila (strain ATCC 7966 / DSM 30187 / BCRC 13018 / CCUG 14551 / JCM 1027 / KCTC 2358 / NCIMB 9240 / NCTC 8049).